We begin with the raw amino-acid sequence, 235 residues long: Ribitol-5-phosphate cytidylyltransferase (235 aa).

CTP-binding positions include 7–10 (LAGG), 82–88 (GADRNTS), and Ser113.

The protein belongs to the IspD/TarI cytidylyltransferase family. TarI subfamily.

It catalyses the reaction D-ribitol 5-phosphate + CTP + H(+) = CDP-L-ribitol + diphosphate. The protein operates within cell wall biogenesis; poly(ribitol phosphate) teichoic acid biosynthesis. Catalyzes the transfer of the cytidylyl group of CTP to D-ribitol 5-phosphate. The polypeptide is Ribitol-5-phosphate cytidylyltransferase (Streptococcus pneumoniae (strain ATCC 700669 / Spain 23F-1)).